We begin with the raw amino-acid sequence, 477 residues long: Protein translocase subunit SecY (477 aa).

Helical transmembrane passes span 28–48 (FMIS…LAII), 67–89 (FFSL…AVGI), 130–150 (IITL…ATNS), 165–185 (DFVA…VFLG), 196–216 (GITL…FIAA), 234–254 (AISF…TTFI), 286–306 (SAGV…VTIA), 329–349 (GIVL…YIQI), 387–407 (FIGA…SALI), and 413–433 (LSLG…FMSA).

This sequence belongs to the SecY/SEC61-alpha family. In terms of assembly, component of the Sec protein translocase complex. Heterotrimer consisting of SecY, SecE and SecG subunits. The heterotrimers can form oligomers, although 1 heterotrimer is thought to be able to translocate proteins. Interacts with the ribosome. Interacts with SecDF, and other proteins may be involved. Interacts with SecA.

The protein resides in the cell membrane. Its function is as follows. The central subunit of the protein translocation channel SecYEG. Consists of two halves formed by TMs 1-5 and 6-10. These two domains form a lateral gate at the front which open onto the bilayer between TMs 2 and 7, and are clamped together by SecE at the back. The channel is closed by both a pore ring composed of hydrophobic SecY resides and a short helix (helix 2A) on the extracellular side of the membrane which forms a plug. The plug probably moves laterally to allow the channel to open. The ring and the pore may move independently. The chain is Protein translocase subunit SecY from Mycoplasma pneumoniae (strain ATCC 29342 / M129 / Subtype 1) (Mycoplasmoides pneumoniae).